A 342-amino-acid chain; its full sequence is Dihydroorotase (342 aa).

Residues H13 and H15 each coordinate Zn(2+). Residues 15–17 (HLR) and N41 each bind substrate. Zn(2+) is bound by residues K98, H135, and H173. K98 is subject to N6-carboxylysine. Residue H135 coordinates substrate. L218 is a binding site for substrate. D246 contributes to the Zn(2+) binding site. Residue D246 is part of the active site. Substrate contacts are provided by H250 and A262.

The protein belongs to the metallo-dependent hydrolases superfamily. DHOase family. Class II DHOase subfamily. As to quaternary structure, homodimer. Requires Zn(2+) as cofactor.

The enzyme catalyses (S)-dihydroorotate + H2O = N-carbamoyl-L-aspartate + H(+). The protein operates within pyrimidine metabolism; UMP biosynthesis via de novo pathway; (S)-dihydroorotate from bicarbonate: step 3/3. Catalyzes the reversible cyclization of carbamoyl aspartate to dihydroorotate. This Vibrio parahaemolyticus serotype O3:K6 (strain RIMD 2210633) protein is Dihydroorotase.